A 240-amino-acid polypeptide reads, in one-letter code: uncharacterized protein (240 aa).

Over residues 1-11 (MGMTPRRKRRG) the composition is skewed to basic residues. Residues 1 to 32 (MGMTPRRKRRGGAVQITRPTGRPRTPTTQTTK) are disordered. Low complexity predominate over residues 17–31 (TRPTGRPRTPTTQTT). A run of 6 helical transmembrane segments spans residues 36 to 56 (WVVGGTTILTFVALLYLVELI), 93 to 113 (LMANTIPLLVLGFLMTLAGLS), 115 to 135 (FVWATAIIWILGGLGTWLIGN), 146 to 166 (IGASGLIFGWLAFLLVFGLFV), 172 to 192 (IVIGLVVLFVYGGILLGAMPV), and 198 to 218 (GVSWQGHLSGAVAGVVAAYLL).

To M.leprae ML1171.

The protein localises to the cell membrane. This is an uncharacterized protein from Mycobacterium tuberculosis (strain CDC 1551 / Oshkosh).